The sequence spans 495 residues: Glycerol kinase (495 aa).

Residue threonine 11 coordinates ADP. Threonine 11, threonine 12, and serine 13 together coordinate ATP. Threonine 11 serves as a coordination point for sn-glycerol 3-phosphate. Residue arginine 15 participates in ADP binding. The sn-glycerol 3-phosphate site is built by arginine 81, glutamate 82, tyrosine 133, and aspartate 242. Glycerol contacts are provided by arginine 81, glutamate 82, tyrosine 133, aspartate 242, and glutamine 243. ADP contacts are provided by threonine 264 and glycine 307. The ATP site is built by threonine 264, glycine 307, glutamine 311, and glycine 408. Glycine 408 and asparagine 412 together coordinate ADP.

This sequence belongs to the FGGY kinase family.

The catalysed reaction is glycerol + ATP = sn-glycerol 3-phosphate + ADP + H(+). It participates in polyol metabolism; glycerol degradation via glycerol kinase pathway; sn-glycerol 3-phosphate from glycerol: step 1/1. With respect to regulation, inhibited by fructose 1,6-bisphosphate (FBP). Its function is as follows. Key enzyme in the regulation of glycerol uptake and metabolism. Catalyzes the phosphorylation of glycerol to yield sn-glycerol 3-phosphate. This Citrifermentans bemidjiense (strain ATCC BAA-1014 / DSM 16622 / JCM 12645 / Bem) (Geobacter bemidjiensis) protein is Glycerol kinase.